The primary structure comprises 654 residues: tRNA 5-methylaminomethyl-2-thiouridine biosynthesis bifunctional protein MnmC (654 aa).

Positions 1–236 (MSTLLQHAQI…KWEVMHGVYT (236 aa)) are tRNA (mnm(5)s(2)U34)-methyltransferase. The tract at residues 262 to 654 (IGAGLAGSAT…FALRRLIRGK (393 aa)) is FAD-dependent cmnm(5)s(2)U34 oxidoreductase.

In the N-terminal section; belongs to the methyltransferase superfamily. tRNA (mnm(5)s(2)U34)-methyltransferase family. It in the C-terminal section; belongs to the DAO family. FAD is required as a cofactor.

It localises to the cytoplasm. The catalysed reaction is 5-aminomethyl-2-thiouridine(34) in tRNA + S-adenosyl-L-methionine = 5-methylaminomethyl-2-thiouridine(34) in tRNA + S-adenosyl-L-homocysteine + H(+). Catalyzes the last two steps in the biosynthesis of 5-methylaminomethyl-2-thiouridine (mnm(5)s(2)U) at the wobble position (U34) in tRNA. Catalyzes the FAD-dependent demodification of cmnm(5)s(2)U34 to nm(5)s(2)U34, followed by the transfer of a methyl group from S-adenosyl-L-methionine to nm(5)s(2)U34, to form mnm(5)s(2)U34. The protein is tRNA 5-methylaminomethyl-2-thiouridine biosynthesis bifunctional protein MnmC of Pseudomonas entomophila (strain L48).